A 142-amino-acid polypeptide reads, in one-letter code: 5-hydroxymethyl-dUMP N-hydrolase (142 aa).

5-hydroxymethyl-dUMP contacts are provided by Gly-7, Ile-9, Arg-10, Gly-11, Ser-78, Gly-80, Glu-84, and Ser-108.

Belongs to the 2'-deoxynucleoside 5'-phosphate N-hydrolase 1 family. As to quaternary structure, monomer and homodimer.

The protein resides in the cytoplasm. It is found in the nucleus. The enzyme catalyses 5-hydroxymethyl-dUMP + H2O = 5-hydroxymethyluracil + 2-deoxy-D-ribose 5-phosphate. Part of a nucleotide salvage pathway that eliminates epigenetically modified 5-hydroxymethyl-dCMP (hmdCMP) in a two-step process entailing deamination to cytotoxic 5-hydroxymethyl-dUMP (hmdUMP), followed by its hydrolysis into 5-hydroxymethyluracil (hmU) and 2-deoxy-D-ribose 5-phosphate (deoxyribosephosphate). Catalyzes the second step in that pathway, the hydrolysis of the N-glycosidic bond in hmdUMP, degrading this cytotoxic nucleotide to avoid its genomic integration. The chain is 5-hydroxymethyl-dUMP N-hydrolase (dnph1) from Tetraodon nigroviridis (Spotted green pufferfish).